Here is a 247-residue protein sequence, read N- to C-terminus: Protein IRON-RELATED TRANSCRIPTION FACTOR 2 (247 aa).

A Nuclear localization signal motif is present at residues 68-75 (HRKLSHNA). The basic motif stretch occupies residues 68–81 (HRKLSHNAYERDRR). The bHLH domain occupies 68–119 (HRKLSHNAYERDRRKQLNELYSSLRALLPDADHTKLSIPTTVSRVLKYIPEL). Residues 82–119 (KQLNELYSSLRALLPDADHTKLSIPTTVSRVLKYIPEL) form a helix-loop-helix motif region.

Belongs to the bHLH protein family. In terms of assembly, forms homodimers. Interacts with BHLH156 in the nucleus. As to expression, expressed constitutively at low levels in the roots. Also observed in flowers, developing seeds, embryos and vascular bundles.

The protein resides in the nucleus. It localises to the cytoplasm. Functionally, transcription activator that binds to the DNA motif 5'-CACGTGG-3' in the promoter of iron (Fe) deficiency-inducible genes as well as of genes involved in iron homeostasis, thus contributing to basal tolerance to iron deficiency, iron uptake from soil and iron transport, particularly during seed maturation and germination. Promotes the accumulation of mugineic acid family phytosiderophores (MAs). Required for ethylene-mediated signaling during iron deficiency responses. Improves growth and yield, especially in calcareous soil with low iron availability. Promotes iron concentration in shoots and grain. The sequence is that of Protein IRON-RELATED TRANSCRIPTION FACTOR 2 from Oryza sativa subsp. japonica (Rice).